Consider the following 256-residue polypeptide: uncharacterized protein (256 aa).

The next 4 membrane-spanning stretches (helical) occupy residues 5–25 (FIEGFETIWTVVRAVVLNYLL), 30–50 (ILSTILYVSAVISWNVSLKVF), 64–84 (VVIFILRIVSLFLWILADPAI), and 105–125 (VGITLYPLYVLLSWAVFLGII). The interval 198–256 (EKTKSLDSISHSSSSSRKSSTELKIPPVETRIVAEIPVPSSVKRRRHRPNKSMGSIKNS) is disordered. A compositionally biased stretch (low complexity) spans 203-215 (LDSISHSSSSSRK). Phosphoserine is present on residues S210 and S211.

The protein localises to the endoplasmic reticulum membrane. Its subcellular location is the nucleus membrane. This is an uncharacterized protein from Schizosaccharomyces pombe (strain 972 / ATCC 24843) (Fission yeast).